A 445-amino-acid chain; its full sequence is Eukaryotic translation initiation factor 3 subunit E (445 aa).

In terms of domain architecture, PCI spans 230–403 (FFNHVKGRDL…GHVVMGAQPL (174 aa)).

It belongs to the eIF-3 subunit E family. In terms of assembly, component of the eukaryotic translation initiation factor 3 (eIF-3) complex.

It is found in the cytoplasm. Component of the eukaryotic translation initiation factor 3 (eIF-3) complex, which is involved in protein synthesis of a specialized repertoire of mRNAs and, together with other initiation factors, stimulates binding of mRNA and methionyl-tRNAi to the 40S ribosome. The eIF-3 complex specifically targets and initiates translation of a subset of mRNAs involved in cell proliferation. In Bombyx mori (Silk moth), this protein is Eukaryotic translation initiation factor 3 subunit E (eIF3-S6).